The sequence spans 74 residues: MAKKPTLDFETTLKELEEIVNRLETGDLPLEEALNEFETAVKLVQQGQERLQKAEQRIQILLQKNEHADLTDYP.

The protein belongs to the XseB family. In terms of assembly, heterooligomer composed of large and small subunits.

Its subcellular location is the cytoplasm. It carries out the reaction Exonucleolytic cleavage in either 5'- to 3'- or 3'- to 5'-direction to yield nucleoside 5'-phosphates.. In terms of biological role, bidirectionally degrades single-stranded DNA into large acid-insoluble oligonucleotides, which are then degraded further into small acid-soluble oligonucleotides. This Glaesserella parasuis serovar 5 (strain SH0165) (Haemophilus parasuis) protein is Exodeoxyribonuclease 7 small subunit.